The following is a 513-amino-acid chain: Bifunctional purine biosynthesis protein PurH (513 aa).

The 144-residue stretch at 1–144 (MSKRALISVS…KNHERVGIVV (144 aa)) folds into the MGS-like domain.

Belongs to the PurH family.

The catalysed reaction is (6R)-10-formyltetrahydrofolate + 5-amino-1-(5-phospho-beta-D-ribosyl)imidazole-4-carboxamide = 5-formamido-1-(5-phospho-D-ribosyl)imidazole-4-carboxamide + (6S)-5,6,7,8-tetrahydrofolate. It catalyses the reaction IMP + H2O = 5-formamido-1-(5-phospho-D-ribosyl)imidazole-4-carboxamide. The protein operates within purine metabolism; IMP biosynthesis via de novo pathway; 5-formamido-1-(5-phospho-D-ribosyl)imidazole-4-carboxamide from 5-amino-1-(5-phospho-D-ribosyl)imidazole-4-carboxamide (10-formyl THF route): step 1/1. It participates in purine metabolism; IMP biosynthesis via de novo pathway; IMP from 5-formamido-1-(5-phospho-D-ribosyl)imidazole-4-carboxamide: step 1/1. This Moorella thermoacetica (strain ATCC 39073 / JCM 9320) protein is Bifunctional purine biosynthesis protein PurH.